Consider the following 1108-residue polypeptide: cGMP-inhibited 3',5'-cyclic phosphodiesterase 3B (1108 aa).

The span at 1–11 (MRKDERERDTP) shows a compositional bias: basic and acidic residues. Residues 1-32 (MRKDERERDTPAMRSPPPPPPPATATAASPPE) are disordered. The tract at residues 1–32 (MRKDERERDTPAMRSPPPPPPPATATAASPPE) is interaction with RAPGEF3. The segment covering 14 to 23 (RSPPPPPPPA) has biased composition (pro residues). The residue at position 15 (serine 15) is a Phosphoserine. 6 consecutive transmembrane segments (helical) span residues 73-93 (AGAR…LLGA), 114-134 (LSLS…CFLT), 144-164 (AGSW…FAAW), 175-195 (AAAA…LTLA), 204-224 (VLVL…LGAL), and 231-251 (LLSC…DHFF). Serine 279 bears the Phosphoserine; by PKB/AKT1 or PKB/AKT2 mark. Residues serine 280 and serine 427 each carry the phosphoserine modification. A disordered region spans residues 405–448 (DRKLHKGLSSKPSFPTAQLRRSSGASGLLTSEHHSRWDRSGGKR). The segment covering 414–433 (SKPSFPTAQLRRSSGASGLL) has biased composition (polar residues). The interaction with PIK3R6 stretch occupies residues 421 to 445 (AQLRRSSGASGLLTSEHHSRWDRSG). Residues 435-445 (SEHHSRWDRSG) show a composition bias toward basic and acidic residues. The PDEase domain occupies 633–1070 (PNIDQEVLLD…KIWKEIIEEE (438 aa)). Residue histidine 719 is the Proton donor of the active site. Histidine 719 lines the AMP pocket. Mg(2+) is bound by residues histidine 723, histidine 803, aspartate 804, and aspartate 919. Aspartate 804, aspartate 919, and glutamine 970 together coordinate AMP. A compositionally biased stretch (acidic residues) spans 999 to 1033 (EEGDDTESDDDDDDDDDDDDDDDEELDSDDEETED). Residues 999–1042 (EEGDDTESDDDDDDDDDDDDDDDEELDSDDEETEDNLNPKPQRR) are disordered.

Belongs to the cyclic nucleotide phosphodiesterase family. PDE3 subfamily. Homodimer. Interacts with PIK3CG; regulates PDE3B activity and thereby cAMP levels in cells. Interacts with RAPGEF3 and PIK3R6; form a signaling complex that regulates phosphatidylinositol 3-kinase gamma in angiogenesis. Interacts with ABHD15; this interaction regulates PDE3B's stability and expression and, thereby, impacts the antilipolytic action of insulin. Mg(2+) serves as cofactor. Mn(2+) is required as a cofactor. Phosphorylation at Ser-279 mediates insulin-induced activation of PDE3B. Abundant in adipose tissues.

The protein resides in the membrane. The enzyme catalyses a nucleoside 3',5'-cyclic phosphate + H2O = a nucleoside 5'-phosphate + H(+). The catalysed reaction is 3',5'-cyclic AMP + H2O = AMP + H(+). It catalyses the reaction 3',5'-cyclic GMP + H2O = GMP + H(+). With respect to regulation, inhibited by cGMP. Its function is as follows. Cyclic nucleotide phosphodiesterase with a dual-specificity for the second messengers cAMP and cGMP, which are key regulators of many important physiological processes. Regulates angiogenesis by inhibiting the cAMP-dependent guanine nucleotide exchange factor RAPGEF3 and downstream phosphatidylinositol 3-kinase gamma-mediated signaling. Controls cardiac contractility by reducing cAMP concentration in cardiocytes. The protein is cGMP-inhibited 3',5'-cyclic phosphodiesterase 3B of Rattus norvegicus (Rat).